Reading from the N-terminus, the 446-residue chain is MTEKPVALIVLAAGQGSRMQSDLPKVLHRLGGVPLVGHALSTGRTLEPEAVVVVAGHGAEAVAKAVAKLNPEAKIALQEQQLGTGHAVSQALPQLEGFEGRVIVLYGDTPFIGQETLASLAAHPADVVVLGFEASDPGRYGRLVTGPEGLERIVEYKDADEATRAIRLVNSGVLAADAALLREFLPMIGNRNAAGEYYLTDIPELARAAGHRVEVVTCDEAETLGINTRAELAAAEAAFQVRARARALEDGVTMTDPATVWFALDTCIGRDAVIGQNVVFGPGVTVESGAEILPFCHLEGCHVSAGATVGPFARLRPGAELGGDVHVGNFVEIKNSVLDEGAKVGHLTYLGDAHVGEATNIGAGTVTCNYDGVSKHRTEIGAHAFIGSDTMLVAPVRVGARAMTGSGSVITEDVPDDALALGRAKQVVKPGLATRLMQALRQKKGN.

The tract at residues M1–R229 is pyrophosphorylase. Residues L11 to G14, K25, Q78, G83 to T84, Y106 to D108, G141, E155, N170, and N227 each bind UDP-N-acetyl-alpha-D-glucosamine. D108 contacts Mg(2+). N227 provides a ligand contact to Mg(2+). The linker stretch occupies residues A230–D250. The segment at G251–N446 is N-acetyltransferase. The UDP-N-acetyl-alpha-D-glucosamine site is built by R316 and K334. The active-site Proton acceptor is the H346. Residues Y349 and N360 each coordinate UDP-N-acetyl-alpha-D-glucosamine. Acetyl-CoA is bound by residues A363, N369 to Y370, S388, S406, and R423.

The protein in the N-terminal section; belongs to the N-acetylglucosamine-1-phosphate uridyltransferase family. It in the C-terminal section; belongs to the transferase hexapeptide repeat family. In terms of assembly, homotrimer. The cofactor is Mg(2+).

It localises to the cytoplasm. The enzyme catalyses alpha-D-glucosamine 1-phosphate + acetyl-CoA = N-acetyl-alpha-D-glucosamine 1-phosphate + CoA + H(+). The catalysed reaction is N-acetyl-alpha-D-glucosamine 1-phosphate + UTP + H(+) = UDP-N-acetyl-alpha-D-glucosamine + diphosphate. Its pathway is nucleotide-sugar biosynthesis; UDP-N-acetyl-alpha-D-glucosamine biosynthesis; N-acetyl-alpha-D-glucosamine 1-phosphate from alpha-D-glucosamine 6-phosphate (route II): step 2/2. The protein operates within nucleotide-sugar biosynthesis; UDP-N-acetyl-alpha-D-glucosamine biosynthesis; UDP-N-acetyl-alpha-D-glucosamine from N-acetyl-alpha-D-glucosamine 1-phosphate: step 1/1. It functions in the pathway bacterial outer membrane biogenesis; LPS lipid A biosynthesis. Functionally, catalyzes the last two sequential reactions in the de novo biosynthetic pathway for UDP-N-acetylglucosamine (UDP-GlcNAc). The C-terminal domain catalyzes the transfer of acetyl group from acetyl coenzyme A to glucosamine-1-phosphate (GlcN-1-P) to produce N-acetylglucosamine-1-phosphate (GlcNAc-1-P), which is converted into UDP-GlcNAc by the transfer of uridine 5-monophosphate (from uridine 5-triphosphate), a reaction catalyzed by the N-terminal domain. The polypeptide is Bifunctional protein GlmU (Paracoccus denitrificans (strain Pd 1222)).